Consider the following 1390-residue polypeptide: DNA-directed RNA polymerase subunit beta (1390 aa).

Belongs to the RNA polymerase beta chain family. As to quaternary structure, the RNAP catalytic core consists of 2 alpha, 1 beta, 1 beta' and 1 omega subunit. When a sigma factor is associated with the core the holoenzyme is formed, which can initiate transcription.

It catalyses the reaction RNA(n) + a ribonucleoside 5'-triphosphate = RNA(n+1) + diphosphate. Its function is as follows. DNA-dependent RNA polymerase catalyzes the transcription of DNA into RNA using the four ribonucleoside triphosphates as substrates. The chain is DNA-directed RNA polymerase subunit beta from Rhodopseudomonas palustris (strain HaA2).